Here is a 30-residue protein sequence, read N- to C-terminus: Trypsin inhibitor 7 (30 aa).

Intrachain disulfides connect Cys-4–Cys-21, Cys-11–Cys-23, and Cys-17–Cys-29.

The protein belongs to the protease inhibitor I7 (squash-type serine protease inhibitor) family.

It is found in the secreted. In terms of biological role, strongly inhibits trypsin, weakly inhibits chymotrypsin. The polypeptide is Trypsin inhibitor 7 (Cyclanthera pedata (Achocha)).